The following is a 149-amino-acid chain: Calmodulin-like protein 3 (149 aa).

EF-hand domains lie at Glu8–Asn43, Pro44–Asp79, Asp81–Lys116, and Leu117–Lys149. Asp21, Asp23, Asp25, Cys27, Glu32, Asp57, Asp59, Asn61, Thr63, Glu68, Asp94, Asp96, Asn98, Glu105, Asp130, Asp132, Asp134, Gln136, and Glu141 together coordinate Ca(2+).

It belongs to the calmodulin family. In terms of assembly, interacts with MYO10, the interaction is calcium-dependent and essential for MYO10 function in filopodial extension.

Its function is as follows. May function as a specific light chain of unconventional myosin-10 (MYO10), also enhances MYO10 translation, possibly by acting as a chaperone for the emerging MYO10 heavy chain protein. May compete with calmodulin by binding, with different affinities, to cellular substrates. The protein is Calmodulin-like protein 3 (Calml3) of Rattus norvegicus (Rat).